We begin with the raw amino-acid sequence, 107 residues long: Phosphoribosyl-ATP pyrophosphatase (107 aa).

It belongs to the PRA-PH family.

It localises to the cytoplasm. The enzyme catalyses 1-(5-phospho-beta-D-ribosyl)-ATP + H2O = 1-(5-phospho-beta-D-ribosyl)-5'-AMP + diphosphate + H(+). It functions in the pathway amino-acid biosynthesis; L-histidine biosynthesis; L-histidine from 5-phospho-alpha-D-ribose 1-diphosphate: step 2/9. This Neisseria meningitidis serogroup A / serotype 4A (strain DSM 15465 / Z2491) protein is Phosphoribosyl-ATP pyrophosphatase (hisE).